Reading from the N-terminus, the 3372-residue chain is Breast cancer type 2 susceptibility protein homolog (3372 aa).

The tract at residues 1–40 (MPIGCKERPTFFEIFRTRCNKADLGPISLNWFEELCLEAP) is interaction with PALB2. The disordered stretch occupies residues 234–260 (DRFIPSGPDSENKSQREAKSQGLGKMV). A compositionally biased stretch (basic and acidic residues) spans 243 to 252 (SENKSQREAK). Residues Ser-435 and Ser-483 each carry the phosphoserine modification. Residues 630–992 (LHSSVKKTCL…DNWARLSDPI (363 aa)) form an interaction with NPM1 region. Residues 704–783 (LQEKHCEDDT…VGLSRGRESY (80 aa)) form a disordered region. A compositionally biased stretch (basic and acidic residues) spans 705–725 (QEKHCEDDTKSQRVADRKEEI). Residues 748–763 (TLKSFSSDPDKSSQLT) are compositionally biased toward polar residues. 5 BRCA2 repeats span residues 994 to 1028 (NHNF…DIEE), 1208 to 1242 (NEVE…DLEN), 1417 to 1451 (FDIF…QKCT), 1518 to 1552 (KEPT…EQEQ), and 1663 to 1697 (TENS…GGEL). The interval 995–2026 (HNFGNGFRTA…LCKVKGILEE (1032 aa)) is interaction with RAD51. The tract at residues 1867–1891 (CSSPSHKDFAETQSEQTPQLNQSIS) is disordered. Over residues 1877-1891 (ETQSEQTPQLNQSIS) the composition is skewed to polar residues. Ser-1924 is subject to Phosphoserine. The BRCA2 6 repeat unit spans residues 1925–1959 (YTNACGIFSTASGKCVQVSDAALQKARQVFSKVED). Thr-1990 is modified (phosphothreonine). The stretch at 1995–2029 (LSSAFSGFSTASGKQVPVSESALCKVKGILEEFDV) is one BRCA2 7 repeat. The tract at residues 2034–2062 (CGPQRSPTSRQDVSKMPPPSCVENKTPKH) is disordered. A Phosphoserine modification is found at Ser-2039. The interaction with HSF2BP stretch occupies residues 2213–2279 (GKRRGVLVSV…EPVTCGPFST (67 aa)). Over residues 2359–2387 (LQDEQHISKNTHVEENKQKPNNIDEHSSG) the composition is skewed to basic and acidic residues. The disordered stretch occupies residues 2359-2395 (LQDEQHISKNTHVEENKQKPNNIDEHSSGDSKNNINN). The segment at 2425–2776 (IASLQNARDI…QRTYPIQWME (352 aa)) is interaction with SEM1. The short motif at 2626-2642 (AAKTLVLCISETISSST) is the Nuclear export signal; masked by interaction with SEM1 element. The tract at residues 3181–3203 (AKSVPTPGSAQMTSKSCYKGERE) is disordered. A compositionally biased stretch (polar residues) spans 3186–3196 (TPGSAQMTSKS). Ser-3236 is subject to Phosphoserine; by CDK1 and CDK2. Ser-3264 carries the post-translational modification Phosphoserine. Residues 3308–3321 (SLNDSPRTAPTSSK) show a composition bias toward polar residues. Residues 3308-3372 (SLNDSPRTAP…MRLQRRQQQT (65 aa)) are disordered. Thr-3331 is modified (phosphothreonine; by CHEK1 and CHEK2). A compositionally biased stretch (basic residues) spans 3361–3372 (SSMRLQRRQQQT).

In terms of assembly, monomer and dimer. Interacts with RAD51; regulates RAD51 recruitment and function at sites of DNA repair. Interacts with SEM1, WDR16, USP11, DMC1, ROCK2 and NPM1. Interacts with both nonubiquitinated and monoubiquitinated FANCD2; this complex also includes XRCC3 and phosphorylated FANCG. Part of a BRCA complex containing BRCA1, BRCA2 and PALB2. Component of the homologous recombination repair (HR) complex composed of ERCC5/XPG, BRCA2, PALB2, DSS1 and RAD51. Within the complex, interacts with ERCC5/XPG and PALB2. Interacts directly with PALB2 which may serve as a scaffold for a HR complex containing PALB2, BRCA2, RAD51C, RAD51 and XRCC3. Interacts with BRCA1 only in the presence of PALB2 which serves as the bridging protein. Interacts with POLH; the interaction is direct. Interacts with the TREX-2 complex subunits PCID2 and SEM1. Interacts with HSF2BP and BRME1; the interaction with HSF2BP is direct and allows the formation of a ternary complex. The complex BRME1:HSF2BP:BRCA2 interacts with SPATA22, MEIOB and RAD51. In terms of processing, phosphorylated by ATM upon irradiation-induced DNA damage. Phosphorylation by CHEK1 and CHEK2 regulates interaction with RAD51. Phosphorylation at Ser-3236 by CDK1 and CDK2 is low in S phase when recombination is active, but increases as cells progress towards mitosis; this phosphorylation prevents homologous recombination-dependent repair during S phase and G2 by inhibiting RAD51 binding. Ubiquitinated in the absence of DNA damage; this does not lead to proteasomal degradation. In contrast, ubiquitination in response to DNA damage leads to proteasomal degradation.

It localises to the nucleus. Its subcellular location is the cytoplasm. The protein localises to the cytoskeleton. The protein resides in the microtubule organizing center. It is found in the centrosome. In terms of biological role, involved in double-strand break repair and/or homologous recombination. Binds RAD51 and potentiates recombinational DNA repair by promoting assembly of RAD51 onto single-stranded DNA (ssDNA). Acts by targeting RAD51 to ssDNA over double-stranded DNA, enabling RAD51 to displace replication protein-A (RPA) from ssDNA and stabilizing RAD51-ssDNA filaments by blocking ATP hydrolysis. Part of a PALB2-scaffolded HR complex containing RAD51C and which is thought to play a role in DNA repair by HR. May participate in S phase checkpoint activation. Binds selectively to ssDNA, and to ssDNA in tailed duplexes and replication fork structures. May play a role in the extension step after strand invasion at replication-dependent DNA double-strand breaks; together with PALB2 is involved in both POLH localization at collapsed replication forks and DNA polymerization activity. In concert with NPM1, regulates centrosome duplication. Interacts with the TREX-2 complex (transcription and export complex 2) subunits PCID2 and SEM1, and is required to prevent R-loop-associated DNA damage and thus transcription-associated genomic instability, independently of its known role in homologous recombination. The sequence is that of Breast cancer type 2 susceptibility protein homolog (BRCA2) from Felis catus (Cat).